A 612-amino-acid polypeptide reads, in one-letter code: Peroxisomal carnitine O-octanoyltransferase (612 aa).

Methionine 1 bears the N-acetylmethionine mark. Residues lysine 40 and lysine 57 each carry the N6-succinyllysine modification. Histidine 327 (proton acceptor) is an active-site residue. Residues lysine 406 and 410 to 417 each bind CoA; that span reads KEKQLHPD. An N6-acetyllysine; alternate modification is found at lysine 406. Lysine 406 is subject to N6-succinyllysine; alternate. 3 residues coordinate (R)-carnitine: tyrosine 439, threonine 441, and threonine 452. The short motif at 610–612 is the Microbody targeting signal element; it reads PHL.

This sequence belongs to the carnitine/choline acetyltransferase family. As to quaternary structure, monomer.

The protein resides in the peroxisome. It catalyses the reaction octanoyl-CoA + (R)-carnitine = O-octanoyl-(R)-carnitine + CoA. The enzyme catalyses 4,8-dimethylnonanoyl-CoA + (R)-carnitine = O-4,8-dimethylnonanoyl-(R)-carnitine + CoA. It functions in the pathway lipid metabolism; fatty acid beta-oxidation. Its function is as follows. Beta-oxidation of fatty acids. The highest activity concerns the C6 to C10 chain length substrate. The sequence is that of Peroxisomal carnitine O-octanoyltransferase (CROT) from Bos taurus (Bovine).